We begin with the raw amino-acid sequence, 396 residues long: Elongation factor Tu 2 (396 aa).

One can recognise a tr-type G domain in the interval 10–206 (KPHCNIGTIG…TVDAYIPQPD (197 aa)). The G1 stretch occupies residues 19 to 26 (GHVDHGKT). 19–26 (GHVDHGKT) contacts GTP. Threonine 26 serves as a coordination point for Mg(2+). The interval 60 to 64 (GITIN) is G2. The G3 stretch occupies residues 81–84 (DCPG). GTP contacts are provided by residues 81–85 (DCPGH) and 136–139 (NKVD). The segment at 136 to 139 (NKVD) is G4. A G5 region spans residues 174-176 (SAK).

Belongs to the TRAFAC class translation factor GTPase superfamily. Classic translation factor GTPase family. EF-Tu/EF-1A subfamily. In terms of assembly, monomer.

It is found in the cytoplasm. It catalyses the reaction GTP + H2O = GDP + phosphate + H(+). Its function is as follows. GTP hydrolase that promotes the GTP-dependent binding of aminoacyl-tRNA to the A-site of ribosomes during protein biosynthesis. This chain is Elongation factor Tu 2, found in Caulobacter sp. (strain K31).